The following is a 470-amino-acid chain: Flavin-containing monooxygenase FMO GS-OX-like 6 (470 aa).

Residue 17–22 (GAGAAG) participates in FAD binding. Residue 214-219 (GYQSSG) coordinates NADP(+).

It belongs to the FMO family. The cofactor is FAD.

Its function is as follows. Catalyzes the conversion of methylthioalkyl glucosinolates of any chain length into methylsulfinylalkyl glucosinolates. The chain is Flavin-containing monooxygenase FMO GS-OX-like 6 from Arabidopsis thaliana (Mouse-ear cress).